Consider the following 557-residue polypeptide: CTP synthase (557 aa).

Residues 1–270 (MTKYVFVTGG…DAIICEELKL (270 aa)) are amidoligase domain. Ser13 contributes to the CTP binding site. Ser13 is a UTP binding site. Residues 14-19 (SLGKGI) and Asp71 contribute to the ATP site. Mg(2+)-binding residues include Asp71 and Glu144. Residues 151-153 (DIE), 191-196 (KTKPTQ), and Lys227 each bind CTP. Residues 191-196 (KTKPTQ) and Lys227 each bind UTP. Positions 295 to 547 (TIGMVGKYVD…VEAALAHHEA (253 aa)) constitute a Glutamine amidotransferase type-1 domain. L-glutamine is bound at residue Gly356. Cys383 serves as the catalytic Nucleophile; for glutamine hydrolysis. L-glutamine is bound by residues 384 to 387 (LGMQ), Glu407, and Arg473. Residues His520 and Glu522 contribute to the active site.

This sequence belongs to the CTP synthase family. As to quaternary structure, homotetramer.

It carries out the reaction UTP + L-glutamine + ATP + H2O = CTP + L-glutamate + ADP + phosphate + 2 H(+). The enzyme catalyses L-glutamine + H2O = L-glutamate + NH4(+). The catalysed reaction is UTP + NH4(+) + ATP = CTP + ADP + phosphate + 2 H(+). It participates in pyrimidine metabolism; CTP biosynthesis via de novo pathway; CTP from UDP: step 2/2. Its activity is regulated as follows. Allosterically activated by GTP, when glutamine is the substrate; GTP has no effect on the reaction when ammonia is the substrate. The allosteric effector GTP functions by stabilizing the protein conformation that binds the tetrahedral intermediate(s) formed during glutamine hydrolysis. Inhibited by the product CTP, via allosteric rather than competitive inhibition. Catalyzes the ATP-dependent amination of UTP to CTP with either L-glutamine or ammonia as the source of nitrogen. Regulates intracellular CTP levels through interactions with the four ribonucleotide triphosphates. This Paraburkholderia phytofirmans (strain DSM 17436 / LMG 22146 / PsJN) (Burkholderia phytofirmans) protein is CTP synthase.